The sequence spans 331 residues: uncharacterized protein (331 aa).

43–50 (GANESGKS) is a binding site for ATP.

This is an uncharacterized protein from Methanocaldococcus jannaschii (strain ATCC 43067 / DSM 2661 / JAL-1 / JCM 10045 / NBRC 100440) (Methanococcus jannaschii).